A 365-amino-acid chain; its full sequence is tRNA-specific 2-thiouridylase MnmA (365 aa).

Residues 6 to 13 and Leu-32 each bind ATP; that span reads AMSGGVDS. Cys-101 (nucleophile) is an active-site residue. Cys-101 and Cys-199 are joined by a disulfide. Gly-125 contributes to the ATP binding site. The interaction with tRNA stretch occupies residues 149–151; the sequence is KDQ. Cys-199 serves as the catalytic Cysteine persulfide intermediate.

This sequence belongs to the MnmA/TRMU family.

It localises to the cytoplasm. It carries out the reaction S-sulfanyl-L-cysteinyl-[protein] + uridine(34) in tRNA + AH2 + ATP = 2-thiouridine(34) in tRNA + L-cysteinyl-[protein] + A + AMP + diphosphate + H(+). Its function is as follows. Catalyzes the 2-thiolation of uridine at the wobble position (U34) of tRNA, leading to the formation of s(2)U34. This Corynebacterium glutamicum (strain R) protein is tRNA-specific 2-thiouridylase MnmA.